The following is a 117-amino-acid chain: Ribonuclease P protein component (117 aa).

It belongs to the RnpA family. As to quaternary structure, consists of a catalytic RNA component (M1 or rnpB) and a protein subunit.

The catalysed reaction is Endonucleolytic cleavage of RNA, removing 5'-extranucleotides from tRNA precursor.. Functionally, RNaseP catalyzes the removal of the 5'-leader sequence from pre-tRNA to produce the mature 5'-terminus. It can also cleave other RNA substrates such as 4.5S RNA. The protein component plays an auxiliary but essential role in vivo by binding to the 5'-leader sequence and broadening the substrate specificity of the ribozyme. The protein is Ribonuclease P protein component of Limosilactobacillus reuteri subsp. reuteri (strain JCM 1112) (Lactobacillus reuteri).